The primary structure comprises 149 residues: 18 kDa antigen 1 (149 aa).

Residues 21–131 (TAARPAVMPM…KPRKIAVGRG (111 aa)) enclose the sHSP domain.

The protein belongs to the small heat shock protein (HSP20) family.

Not known. This protein is one of the major immune reactive proteins in mycobacteria. This Mycobacterium intracellulare protein is 18 kDa antigen 1.